Reading from the N-terminus, the 602-residue chain is Beta-(1--&gt;2)glucan export ATP-binding/permease protein NdvA (602 aa).

In terms of domain architecture, ABC transmembrane type-1 spans 21–311 (GWVLAGANLL…VVGFVNSVFM (291 aa)). Transmembrane regions (helical) follow at residues 22-42 (WVLA…PVLF), 68-88 (LLLA…AVAL), 146-166 (EHFA…YINW), 167-187 (RLAL…TLVV), 238-258 (LLAM…ITRA), and 285-305 (IVMF…VVGF). The 235-residue stretch at 345–579 (VEFDNVSFSY…RGYFAELAHA (235 aa)) folds into the ABC transporter domain. 378–385 (GATGAGKS) serves as a coordination point for ATP.

It belongs to the ABC transporter superfamily. Beta-(1--&gt;2)glucan exporter (TC 3.A.1.108.1) family. Homodimer.

The protein localises to the cell inner membrane. It catalyses the reaction [(1-&gt;2)-beta-D-glucosyl](n)(in) + ATP + H2O = [(1-&gt;2)-beta-D-glucosyl](n)(out) + ADP + phosphate + H(+). Functionally, involved in Beta-(1--&gt;2)glucan export. Transmembrane domains (TMD) form a pore in the inner membrane and the ATP-binding domain (NBD) is responsible for energy generation. This chain is Beta-(1--&gt;2)glucan export ATP-binding/permease protein NdvA, found in Rhodopseudomonas palustris (strain BisA53).